The chain runs to 156 residues: Endogenous retrovirus group K member 7 Pro protein (156 aa).

A Peptidase A2 domain is found at Phe21–Leu96. The active site involves Asp26. The region spanning Tyr111–Phe156 is the G-patch domain.

It belongs to the peptidase A2 family. HERV class-II K(HML-2) subfamily. As to quaternary structure, active as a homodimer. Post-translationally, autoproteolytically processed at the N-terminus. Expected C-terminal autoprocessing not detected. The sequence shown is that of the processed Pro protein.

The catalysed reaction is Processing at the authentic HIV-1 PR recognition site and release of the mature p17 matrix and the p24 capsid protein, as a result of the cleavage of the -SQNY-|-PIVQ- cleavage site.. In terms of biological role, retroviral proteases have roles in processing of the primary translation products and the maturation of the viral particle. Endogenous Pro proteins may have kept, lost or modified their original function during evolution. This endogenous protein has retained most of the characteristics of retroviral proteases. The polypeptide is Endogenous retrovirus group K member 7 Pro protein (ERVK-7) (Homo sapiens (Human)).